The sequence spans 753 residues: 5-methyltetrahydropteroyltriglutamate--homocysteine methyltransferase (753 aa).

5-methyltetrahydropteroyltri-L-glutamate-binding positions include Arg-17–Lys-20 and Lys-117. Residues Ile-431 to Ser-433 and Glu-484 contribute to the L-homocysteine site. L-methionine contacts are provided by residues Ile-431 to Ser-433 and Glu-484. 5-methyltetrahydropteroyltri-L-glutamate is bound by residues Arg-515–Cys-516 and Trp-561. Asp-599 provides a ligand contact to L-homocysteine. An L-methionine-binding site is contributed by Asp-599. A 5-methyltetrahydropteroyltri-L-glutamate-binding site is contributed by Glu-605. 3 residues coordinate Zn(2+): His-641, Cys-643, and Glu-665. The active-site Proton donor is His-694. Residue Cys-726 coordinates Zn(2+).

This sequence belongs to the vitamin-B12 independent methionine synthase family. Requires Zn(2+) as cofactor.

It carries out the reaction 5-methyltetrahydropteroyltri-L-glutamate + L-homocysteine = tetrahydropteroyltri-L-glutamate + L-methionine. It functions in the pathway amino-acid biosynthesis; L-methionine biosynthesis via de novo pathway; L-methionine from L-homocysteine (MetE route): step 1/1. Functionally, catalyzes the transfer of a methyl group from 5-methyltetrahydrofolate to homocysteine resulting in methionine formation. The protein is 5-methyltetrahydropteroyltriglutamate--homocysteine methyltransferase of Shigella flexneri serotype 5b (strain 8401).